The sequence spans 677 residues: Transmembrane and coiled-coil domain-containing protein 3 (677 aa).

An N-terminal signal peptide occupies residues 1-22 (MKVLGRSFFWVLFPVLPWAVQA). Residues 124 to 204 (DYKDVVNMKE…EEEIEEHAFD (81 aa)) adopt a coiled-coil conformation. 2 N-linked (GlcNAc...) asparagine glycosylation sites follow: Asn-206 and Asn-230. The next 10 helical transmembrane spans lie at 286–306 (WLCTAIGLPTMFGYIICGVLL), 317–337 (IVQVETLGEFGVFFTLFLVGL), 350–370 (ISLQGPCYMTLLMIAFGLLWG), 416–436 (VLLGMLVTQDVQLGLFMAVMP), 456–476 (ILVLIGQILFSLAAVFLLCLV), 498–518 (EILILGISAFIFLMLTVTELL), 554–574 (FLAIVFFASIGLHVFPTFVAY), 578–598 (VLVFLTLSVVVMKFLLAALVL), 608–628 (YIKWIVSAGLAQVSEFSFVLG), and 640–660 (EVYLLILSVTTLSLLLAPVLW).

The protein belongs to the monovalent cation:proton antiporter 2 (CPA2) transporter (TC 2.A.37) family. As to expression, expressed in the cornea, lens capsule and choroid-retinal pigment epithelium (at protein level).

It is found in the membrane. Probable Na(+)/H(+) antiporter. The protein is Transmembrane and coiled-coil domain-containing protein 3 (TMCO3) of Homo sapiens (Human).